A 415-amino-acid chain; its full sequence is MSGLQPPRGTHDLIGETMRRHHHVVETARRVLRTYGFEEWSTPIFEDTRVFSRTLGETSDVVSKEMYTFEDRGGESITLRPEGTAAICRALVTNGLTQSLPQKVFYHGSMFRYERPQKGRYRQFHQIGAELIGAESPLRDAETIAMAQDILRELGLGDHVTLELNTLGDLASRQAWREALVAYFRDHADALSEESRVRLEANPLRILDSKSEQDRKLLDAAPAFADYLNDDSRQFWDGLRSSLQAFGVDFVENPRIVRGLDYYSHTAFEFVTSKLGAQGTVLAGGRYEGLVEQMGGPAIPAIGWAGGIERLAMLLDSVPELPAGIALVPMGDEAVLKAASIARVLRSAGLRAEIETRGNMKKRMERVVKSGASHAIVLGDEEIAKNIVQLRDLSSREQQEVPVADLARILSAGRA.

The protein belongs to the class-II aminoacyl-tRNA synthetase family. In terms of assembly, homodimer.

The protein resides in the cytoplasm. The enzyme catalyses tRNA(His) + L-histidine + ATP = L-histidyl-tRNA(His) + AMP + diphosphate + H(+). The sequence is that of Histidine--tRNA ligase from Gluconobacter oxydans (strain 621H) (Gluconobacter suboxydans).